Reading from the N-terminus, the 207-residue chain is MKPLTPRQAEVLELIKANMNETGMPPTRAEIAQKLGFKSANAAEEHLKALAKKGVIEIMPGTSRGIRLLLEEEEPLEESGLPLIGKVAAGEPILAQEHIESHYQVDPALFHPRADFLLRVQGMSMKNIGILDGDLLAVHKTQEVRNGQVVVARLDEDVTVKRFQRKGSQVWLLPENEELSPIEVDLSCQQLTIEGLAVGVIRNADWM.

A DNA-binding region (H-T-H motif) is located at residues 28-48 (RAEIAQKLGFKSANAAEEHLK). Residues Ser124 and Lys161 each act as for autocatalytic cleavage activity in the active site.

The protein belongs to the peptidase S24 family. As to quaternary structure, homodimer.

It catalyses the reaction Hydrolysis of Ala-|-Gly bond in repressor LexA.. Represses a number of genes involved in the response to DNA damage (SOS response), including recA and lexA. In the presence of single-stranded DNA, RecA interacts with LexA causing an autocatalytic cleavage which disrupts the DNA-binding part of LexA, leading to derepression of the SOS regulon and eventually DNA repair. This is LexA repressor from Aeromonas hydrophila subsp. hydrophila (strain ATCC 7966 / DSM 30187 / BCRC 13018 / CCUG 14551 / JCM 1027 / KCTC 2358 / NCIMB 9240 / NCTC 8049).